Reading from the N-terminus, the 216-residue chain is ATP-dependent Clp protease proteolytic subunit (216 aa).

Ser-101 serves as the catalytic Nucleophile. His-126 is a catalytic residue.

This sequence belongs to the peptidase S14 family. Component of the chloroplastic Clp protease core complex.

It localises to the plastid. Its subcellular location is the chloroplast stroma. The catalysed reaction is Hydrolysis of proteins to small peptides in the presence of ATP and magnesium. alpha-casein is the usual test substrate. In the absence of ATP, only oligopeptides shorter than five residues are hydrolyzed (such as succinyl-Leu-Tyr-|-NHMec, and Leu-Tyr-Leu-|-Tyr-Trp, in which cleavage of the -Tyr-|-Leu- and -Tyr-|-Trp bonds also occurs).. Cleaves peptides in various proteins in a process that requires ATP hydrolysis. Has a chymotrypsin-like activity. Plays a major role in the degradation of misfolded proteins. In Oryza nivara (Indian wild rice), this protein is ATP-dependent Clp protease proteolytic subunit.